The primary structure comprises 382 residues: MAKKDYYEVLGLQKGASEDEIKRAYKRLASKHHPDKNQGSKEAEEKFKEINEAYEVLGDDQKRAAYDQYGHAAFEQGGGAGGFGGGFGGADFGDMFGDIFGDIFGGGGRGRQRVVRGEDLRYDLEISLEEAVKGTTKDIQINTLAHCDSCGGSGAEKGSKVETCPHCHGSGRIRRQQGFFVSESICPTCHGSGKKIEKPCRNCHGEGRVHKKENLSVKIPAGVDTGNQLRLAGKGAAGENGAPAGDLYVVIHVREHNIFERDGSNLYCEVPISFATAALGGEIEVPTLDGRVKLKIPAETQTGKLFRMRGKGVASTRSGYAGDLICRIVVETPVNLTSEQKELLHKLEESLQGKDLSKHAPKSSGFLDGVKKFFDNLGKSDK.

The region spanning 5–70 (DYYEVLGLQK…QKRAAYDQYG (66 aa)) is the J domain. The CR-type zinc finger occupies 134 to 212 (GTTKDIQINT…CHGEGRVHKK (79 aa)). Cys-147, Cys-150, Cys-164, Cys-167, Cys-186, Cys-189, Cys-200, and Cys-203 together coordinate Zn(2+). CXXCXGXG motif repeat units follow at residues 147 to 154 (CDSCGGSG), 164 to 171 (CPHCHGSG), 186 to 193 (CPTCHGSG), and 200 to 207 (CRNCHGEG).

Belongs to the DnaJ family. As to quaternary structure, homodimer. Zn(2+) is required as a cofactor.

Its subcellular location is the cytoplasm. Participates actively in the response to hyperosmotic and heat shock by preventing the aggregation of stress-denatured proteins and by disaggregating proteins, also in an autonomous, DnaK-independent fashion. Unfolded proteins bind initially to DnaJ; upon interaction with the DnaJ-bound protein, DnaK hydrolyzes its bound ATP, resulting in the formation of a stable complex. GrpE releases ADP from DnaK; ATP binding to DnaK triggers the release of the substrate protein, thus completing the reaction cycle. Several rounds of ATP-dependent interactions between DnaJ, DnaK and GrpE are required for fully efficient folding. Also involved, together with DnaK and GrpE, in the DNA replication of plasmids through activation of initiation proteins. The protein is Chaperone protein DnaJ of Haemophilus influenzae (strain ATCC 51907 / DSM 11121 / KW20 / Rd).